The sequence spans 367 residues: Alanine racemase (367 aa).

The Proton acceptor; specific for D-alanine role is filled by Lys-35. Lys-35 carries the post-translational modification N6-(pyridoxal phosphate)lysine. Position 130 (Arg-130) interacts with substrate. Tyr-256 functions as the Proton acceptor; specific for L-alanine in the catalytic mechanism. A substrate-binding site is contributed by Met-304.

It belongs to the alanine racemase family. It depends on pyridoxal 5'-phosphate as a cofactor.

The enzyme catalyses L-alanine = D-alanine. It participates in amino-acid biosynthesis; D-alanine biosynthesis; D-alanine from L-alanine: step 1/1. Catalyzes the interconversion of L-alanine and D-alanine. May also act on other amino acids. The polypeptide is Alanine racemase (alr) (Methylibium petroleiphilum (strain ATCC BAA-1232 / LMG 22953 / PM1)).